We begin with the raw amino-acid sequence, 680 residues long: Fermitin family homolog 2 (680 aa).

An interaction with membranes containing phosphatidylinositol phosphate region spans residues 40-81 (HIGGVMLKLVEKLDVKKDWSDHALWWEKKRTWLLKTHWTLDK). A disordered region spans residues 141 to 165 (LKKPRDPTKKKKKKLDDQSEDEALE). Residues Ser-159, Ser-181, Ser-339, and Ser-351 each carry the phosphoserine modification. In terms of domain architecture, FERM spans 189–661 (MTPTYDAHDG…GYIFLSTRAK (473 aa)). The 97-residue stretch at 380 to 476 (KVFKPKKLTL…WMAACRLASK (97 aa)) folds into the PH domain. Residue Lys-383 coordinates a 1,2-diacyl-sn-glycero-3-phospho-(1D-myo-inositol-3,4,5-trisphosphate). Ser-666 carries the post-translational modification Phosphoserine.

Belongs to the kindlin family. As to quaternary structure, interacts with ILK. Interacts with FBLIM1. Interacts with ITGB1 and ITGB3. Interacts with active, unphosphorylated CTNNB1. Identified in a complex with CTNNB1 and TCF7L2/TCF4. Interacts with ITGB1; the interaction is inhibited in presence of ITGB1BP1. Ubiquitous. Found in numerous tumor tissues.

The protein resides in the cytoplasm. Its subcellular location is the cell cortex. It is found in the cytoskeleton. The protein localises to the stress fiber. It localises to the cell junction. The protein resides in the focal adhesion. Its subcellular location is the membrane. It is found in the cell projection. The protein localises to the lamellipodium membrane. It localises to the nucleus. The protein resides in the myofibril. Its subcellular location is the sarcomere. It is found in the i band. The protein localises to the cell surface. In terms of biological role, scaffolding protein that enhances integrin activation mediated by TLN1 and/or TLN2, but activates integrins only weakly by itself. Binds to membranes enriched in phosphoinositides. Enhances integrin-mediated cell adhesion onto the extracellular matrix and cell spreading; this requires both its ability to interact with integrins and with phospholipid membranes. Required for the assembly of focal adhesions. Participates in the connection between extracellular matrix adhesion sites and the actin cytoskeleton and also in the orchestration of actin assembly and cell shape modulation. Recruits FBLIM1 to focal adhesions. Plays a role in the TGFB1 and integrin signaling pathways. Stabilizes active CTNNB1 and plays a role in the regulation of transcription mediated by CTNNB1 and TCF7L2/TCF4 and in Wnt signaling. This chain is Fermitin family homolog 2 (FERMT2), found in Homo sapiens (Human).